Consider the following 570-residue polypeptide: BRICHOS domain-containing protein C09F5.1 (570 aa).

The Cytoplasmic portion of the chain corresponds to 1 to 288 (MVVEQIEVIE…YTPELLRSLC (288 aa)). Polar residues-rich tracts occupy residues 93-107 (SGAT…SGDS) and 228-246 (TSTL…SLVS). 2 disordered regions span residues 93–116 (SGAT…GADR) and 218–248 (SSWD…VSRE). The chain crosses the membrane as a helical span at residues 289–309 (CILLLLLLLLFLMFIIFNAIF). The Extracellular portion of the chain corresponds to 310-570 (NRYAVSEFLL…RKSINNATLV (261 aa)). The region spanning 369–461 (TAVDFNTGYV…IDDCEGAQWY (93 aa)) is the BRICHOS domain. Cysteines 395 and 455 form a disulfide.

The protein localises to the membrane. In Caenorhabditis elegans, this protein is BRICHOS domain-containing protein C09F5.1.